The primary structure comprises 535 residues: Cytochrome c oxidase subunit 1 (535 aa).

A helical membrane pass occupies residues 17-37 (ILYFIFAIFSGVIGSTMSLII). Positions 40, 43, and 45 each coordinate Ca(2+). Helical transmembrane passes span 58–78 (VLVVGHALLMIFFLVMPGLVG), 104–124 (FWLLPPALVCLVASTLIESWA), 147–167 (LGIFAIHLTSISSLLGAINFI), 184–204 (PLFVWAIIITAVMLLLSLPVL), 236–256 (LFWFFGHPEVYILIVPGFGII), and 268–288 (VFGEISMVYAMASIAFLGFLV). His-63 contributes to the Fe(II)-heme a binding site. Residue His-242 coordinates Cu cation. A cross-link (1'-histidyl-3'-tyrosine (His-Tyr)) is located at residues 242-246 (HPEVY). Tyr-246 is a binding site for O2. Cu cation-binding residues include His-291 and His-292. Transmembrane regions (helical) follow at residues 311 to 331 (MVIAVPTGIKIFSWLATLYGG) and 339 to 359 (MLYAIAFLFLFTIGGLTGVAL). 2 residues coordinate Mg(2+): His-369 and Asp-370. The next 2 membrane-spanning stretches (helical) occupy residues 373–393 (YVVGHFHYVLSMGAIFSLFAG) and 413–433 (IQFWLIFVGANVIFMPMHFLG). His-377 provides a ligand contact to heme a3. His-379 is a Fe(II)-heme a binding site. Pro-442 contributes to the Ca(2+) binding site. Residues 453-473 (YVSSIGSVIAIISLALFIYII) form a helical membrane-spanning segment.

This sequence belongs to the heme-copper respiratory oxidase family. As to quaternary structure, component of the cytochrome c oxidase (complex IV, CIV), a multisubunit enzyme composed of a catalytic core of 3 subunits and several supernumerary subunits. The complex exists as a monomer or a dimer and forms supercomplexes (SCs) in the inner mitochondrial membrane with ubiquinol-cytochrome c oxidoreductase (cytochrome b-c1 complex, complex III, CIII). Heme serves as cofactor. The cofactor is Cu cation.

Its subcellular location is the mitochondrion inner membrane. The enzyme catalyses 4 Fe(II)-[cytochrome c] + O2 + 8 H(+)(in) = 4 Fe(III)-[cytochrome c] + 2 H2O + 4 H(+)(out). It participates in energy metabolism; oxidative phosphorylation. Its function is as follows. Component of the cytochrome c oxidase, the last enzyme in the mitochondrial electron transport chain which drives oxidative phosphorylation. The respiratory chain contains 3 multisubunit complexes succinate dehydrogenase (complex II, CII), ubiquinol-cytochrome c oxidoreductase (cytochrome b-c1 complex, complex III, CIII) and cytochrome c oxidase (complex IV, CIV), that cooperate to transfer electrons derived from NADH and succinate to molecular oxygen, creating an electrochemical gradient over the inner membrane that drives transmembrane transport and the ATP synthase. Cytochrome c oxidase is the component of the respiratory chain that catalyzes the reduction of oxygen to water. Electrons originating from reduced cytochrome c in the intermembrane space (IMS) are transferred via the dinuclear copper A center (CU(A)) of subunit 2 and heme A of subunit 1 to the active site in subunit 1, a binuclear center (BNC) formed by heme A3 and copper B (CU(B)). The BNC reduces molecular oxygen to 2 water molecules using 4 electrons from cytochrome c in the IMS and 4 protons from the mitochondrial matrix. The protein is Cytochrome c oxidase subunit 1 (COX1) of Wickerhamomyces canadensis (Yeast).